The chain runs to 151 residues: Large ribosomal subunit protein bL9 (151 aa).

This sequence belongs to the bacterial ribosomal protein bL9 family.

In terms of biological role, binds to the 23S rRNA. This is Large ribosomal subunit protein bL9 from Mycoplasmopsis agalactiae (strain NCTC 10123 / CIP 59.7 / PG2) (Mycoplasma agalactiae).